The sequence spans 131 residues: Aspartate 1-decarboxylase (131 aa).

Ser-25 functions as the Schiff-base intermediate with substrate; via pyruvic acid in the catalytic mechanism. Pyruvic acid (Ser) is present on Ser-25. Thr-57 contacts substrate. Residue Tyr-58 is the Proton donor of the active site. Residue 73–75 participates in substrate binding; that stretch reads GAA. The tract at residues 112 to 131 is disordered; it reads NVPTTQKSENPGQGSLRNAI. The span at 113–131 shows a compositional bias: polar residues; the sequence is VPTTQKSENPGQGSLRNAI.

This sequence belongs to the PanD family. As to quaternary structure, heterooctamer of four alpha and four beta subunits. It depends on pyruvate as a cofactor. In terms of processing, is synthesized initially as an inactive proenzyme, which is activated by self-cleavage at a specific serine bond to produce a beta-subunit with a hydroxyl group at its C-terminus and an alpha-subunit with a pyruvoyl group at its N-terminus.

It localises to the cytoplasm. The catalysed reaction is L-aspartate + H(+) = beta-alanine + CO2. Its pathway is cofactor biosynthesis; (R)-pantothenate biosynthesis; beta-alanine from L-aspartate: step 1/1. Catalyzes the pyruvoyl-dependent decarboxylation of aspartate to produce beta-alanine. This chain is Aspartate 1-decarboxylase, found in Syntrophotalea carbinolica (strain DSM 2380 / NBRC 103641 / GraBd1) (Pelobacter carbinolicus).